The following is a 642-amino-acid chain: Fimbrin (642 aa).

EF-hand domains lie at 16–50 and 51–86; these read EDLF…KDGD and ATYD…LRES. Asp-29, Asp-31, Trp-35, Asp-66, Ser-68, Arg-70, and Asp-75 together coordinate Ca(2+). Actin-binding regions lie at residues 125–394 and 395–642; these read IVAG…GLEP and IQEE…TLNK. 4 consecutive Calponin-homology (CH) domains span residues 139 to 259, 287 to 390, 411 to 521, and 534 to 642; these read EEER…RRGL, LPPE…NTHP, EREA…RRNI, and DMSD…TLNK.

Binds to actin, and functionally associates with actin structures involved in the development and maintenance of cell polarity. The protein is Fimbrin (SAC6) of Saccharomyces cerevisiae (strain ATCC 204508 / S288c) (Baker's yeast).